The sequence spans 109 residues: Gliadoralin-A (109 aa).

The N-terminal stretch at 1 to 16 (MLVILLMVVVLALSSA) is a signal peptide. Pyrrolidone carboxylic acid is present on Gln-17. The disordered stretch occupies residues 17-109 (QDPNRDFVVS…PRYQQPRRAV (93 aa)). The span at 35–109 (PSSQQGTVGG…PRYQQPRRAV (75 aa)) shows a compositional bias: low complexity. The propeptide occupies 107-109 (RAV).

In terms of processing, predominantly proteolytically processed at its C-terminus before secretion to produce the major form gliadoralin A 1-90. Further proteloytically processed after secretion to produce minor forms. Potential substrate of transglutaminase. As to expression, found in saliva (at protein level). Secreted from the submandibular gland.

It localises to the secreted. Its function is as follows. May play a role in the formation of the protective mucosal protein pellicle involved in the reinforcement and protection of oral mucosal epithelial surface. The protein is Gliadoralin-A of Rattus norvegicus (Rat).